The primary structure comprises 482 residues: ATP synthase subunit beta (482 aa).

161–168 (GGAGVGKT) contacts ATP.

Belongs to the ATPase alpha/beta chains family. As to quaternary structure, F-type ATPases have 2 components, CF(1) - the catalytic core - and CF(0) - the membrane proton channel. CF(1) has five subunits: alpha(3), beta(3), gamma(1), delta(1), epsilon(1). CF(0) has three main subunits: a(1), b(2) and c(9-12). The alpha and beta chains form an alternating ring which encloses part of the gamma chain. CF(1) is attached to CF(0) by a central stalk formed by the gamma and epsilon chains, while a peripheral stalk is formed by the delta and b chains.

It localises to the cell inner membrane. The catalysed reaction is ATP + H2O + 4 H(+)(in) = ADP + phosphate + 5 H(+)(out). Its function is as follows. Produces ATP from ADP in the presence of a proton gradient across the membrane. The catalytic sites are hosted primarily by the beta subunits. The polypeptide is ATP synthase subunit beta (Anaeromyxobacter dehalogenans (strain 2CP-C)).